We begin with the raw amino-acid sequence, 195 residues long: Probable WRKY transcription factor 56 (195 aa).

Positions M1–M10 are enriched in polar residues. Disordered regions lie at residues M1–N20 and E70–G93. The segment at residues S108–E173 is a DNA-binding region (WRKY).

This sequence belongs to the WRKY group II-c family.

It localises to the nucleus. Transcription factor. Interacts specifically with the W box (5'-(T)TGAC[CT]-3'), a frequently occurring elicitor-responsive cis-acting element. The chain is Probable WRKY transcription factor 56 (WRKY56) from Arabidopsis thaliana (Mouse-ear cress).